A 594-amino-acid polypeptide reads, in one-letter code: Actin-histidine N-methyltransferase (594 aa).

Positions 1-22 are disordered; the sequence is MGKKSRVKTQKSGTGATATVSP. Residues 10–20 are compositionally biased toward polar residues; it reads QKSGTGATATV. S-adenosyl-L-methionine-binding positions include Arg-75, 104–106, Arg-254, 275–279, and 325–327; these read EGF, DMCNH, and SGF. The SET domain maps to 94-314; the sequence is EGFEMVNFKE…AGEQIYIFYG (221 aa). Ser-513 is subject to Phosphoserine. Positions 549 to 594 are disordered; the sequence is ENGLVNGENSIPNGTRSENESLNQESKRAVEDAKGSSSDSTAGVKE. The span at 555–572 shows a compositional bias: polar residues; sequence GENSIPNGTRSENESLNQ. The span at 573-582 shows a compositional bias: basic and acidic residues; sequence ESKRAVEDAK. Positions 583–594 are enriched in polar residues; the sequence is GSSSDSTAGVKE.

The protein belongs to the class V-like SAM-binding methyltransferase superfamily. SETD3 actin-histidine methyltransferase family. In terms of assembly, interacts with MYOD1. In terms of processing, phosphorylated by GSK3B, which is required for recognition by the SCF(FBXW7) complex and subsequent degradation. Ubiquitinated by the SCF(FBXW7) complex following phosphorylation by GSK3B, leading to its degradation by the proteasome.

It is found in the cytoplasm. The protein localises to the nucleus. It catalyses the reaction L-histidyl-[protein] + S-adenosyl-L-methionine = N(tele)-methyl-L-histidyl-[protein] + S-adenosyl-L-homocysteine + H(+). Functionally, protein-histidine N-methyltransferase that specifically mediates 3-methylhistidine (tele-methylhistidine) methylation of actin at 'His-73'. Histidine methylation of actin is required for smooth muscle contraction of the laboring uterus during delivery. Does not have protein-lysine N-methyltransferase activity and probably only catalyzes histidine methylation of actin. In Homo sapiens (Human), this protein is Actin-histidine N-methyltransferase.